A 348-amino-acid polypeptide reads, in one-letter code: Isopentenyl-diphosphate delta-isomerase (348 aa).

11–12 (RK) contributes to the substrate binding site. FMN contacts are provided by residues 70–72 (AMT), serine 100, and asparagine 131. Substrate is bound at residue 100–102 (SQR). Substrate is bound at residue glutamine 165. Glutamate 166 lines the Mg(2+) pocket. Residues lysine 197, threonine 231, 278–280 (GIR), and 299–300 (AR) each bind FMN.

The protein belongs to the IPP isomerase type 2 family. As to quaternary structure, homooctamer. Dimer of tetramers. The cofactor is FMN. NADPH serves as cofactor. It depends on Mg(2+) as a cofactor.

It localises to the cytoplasm. It carries out the reaction isopentenyl diphosphate = dimethylallyl diphosphate. Functionally, involved in the biosynthesis of isoprenoids. Catalyzes the 1,3-allylic rearrangement of the homoallylic substrate isopentenyl (IPP) to its allylic isomer, dimethylallyl diphosphate (DMAPP). The protein is Isopentenyl-diphosphate delta-isomerase of Mycobacterium marinum (strain ATCC BAA-535 / M).